We begin with the raw amino-acid sequence, 106 residues long: DLMQFETLIMKSGVWYYGSYGCYCGSGGQFRPQDASDRCCFVHDCCYGKNGDIVCGGDDPCKKQICECDRVAATCFRDNKVTYDNKYWFFPAKFPPQNCKEESEPC.

Positions 23, 25, and 27 each coordinate Ca(2+). 5 disulfide bridges follow: C24/C40, C39/C75, C45/C106, C46/C68, and C55/C66. The active site involves H43. A Ca(2+)-binding site is contributed by D44. The active site involves D69.

It depends on Ca(2+) as a cofactor. Expressed by the venom gland.

The protein localises to the secreted. The catalysed reaction is a 1,2-diacyl-sn-glycero-3-phosphocholine + H2O = a 1-acyl-sn-glycero-3-phosphocholine + a fatty acid + H(+). With respect to regulation, partially inhibited by magnesium ions and completely inhibited by zinc ions These divalent cations may act as competitive antagonists of the cofactor. Snake venom phospholipase A2 (PLA2) that induces inflammatory response, with local edema and release of cytokines IL-1 alpha, IL-6 and TNF-alpha. Does not exhibit myotoxic, anticoagulant and antibacterial effects. Release of pro-inflammatory cytokines may be due to mast cell degranulation, and edema may be induced by arachidonic acid that results from the PLA2 catalytic activity. PLA2 catalyzes the calcium-dependent hydrolysis of the 2-acyl groups in 3-sn-phosphoglycerides. In Bothrocophias hyoprora (Amazonian hognose viper), this protein is Acidic phospholipase A2 PhTX-III.